The sequence spans 434 residues: Evolutionarily conserved signaling intermediate in Toll pathway, mitochondrial (434 aa).

A mitochondrion-targeting transit peptide spans 1 to 48 (MSWVQVNLLARGLSRGWGSICRTVLSGTPFAQPSLQARGLHCSAVTHK). Residue lysine 371 forms a Glycyl lysine isopeptide (Lys-Gly) (interchain with G-Cter in ubiquitin) linkage. Positions 403-434 (TRLEGQSPPHSPPKGPEEDDEAIQAQQRQGQS) are disordered.

The protein belongs to the ECSIT family. Interacts with MAP3K1, SMAD4 and TRAF6. Interacts with SMAD1 only after BMP4-treatment. Part of the mitochondrial complex I assembly/MCIA complex that comprises at least the core subunits TMEM126B, NDUFAF1, ECSIT and ACAD9 and complement subunits such as COA1 and TMEM186. Interacts with NDUFAF1. Interacts with ACAD9. Interacts with TRIM59. Interacts with TMEM70 and TMEM242. Interacts (when ubiquitinated) with NF-kappa-B subunits RELA and NFKB1. Interacts with RIGI, IFIT1 and MAVS; these interactions promote RLR-mediated type I IFN induction. Interacts with SQSTM1; this interaction inhibits TLR4 signaling via functional regulation of the TRAF6-ECSIT complex. Interacts with cereblon/CRBN; this interaction inhibits the ubiquitination of ECSIT. Post-translationally, ubiquitinated on Lys-371; leading to translocation in the nucleus together with RELA and NFKB1 and expression of NF-kappa-B-dependent genes.

It is found in the cytoplasm. The protein resides in the nucleus. It localises to the mitochondrion. Its function is as follows. Adapter protein that plays a role in different signaling pathways including TLRs and IL-1 pathways or innate antiviral induction signaling. Plays a role in the activation of NF-kappa-B by forming a signal complex with TRAF6 and TAK1/MAP3K7 to activate TAK1/MAP3K7 leading to activation of IKKs. Once ubiquitinated, interacts with the dissociated RELA and NFKB1 proteins and translocates to the nucleus where it induces NF-kappa-B-dependent gene expression. Plays a role in innate antiviral immune response by bridging the pattern recognition receptors RIGI and MDA5/IFIT1 to the MAVS complex at the mitochondrion. Promotes proteolytic activation of MAP3K1. Involved in the BMP signaling pathway. Required for normal embryonic development. In terms of biological role, as part of the MCIA complex, involved in the assembly of the mitochondrial complex I. The protein is Evolutionarily conserved signaling intermediate in Toll pathway, mitochondrial of Rattus norvegicus (Rat).